Reading from the N-terminus, the 247-residue chain is 5-oxoprolinase subunit A (247 aa).

This sequence belongs to the LamB/PxpA family. As to quaternary structure, forms a complex composed of PxpA, PxpB and PxpC.

It catalyses the reaction 5-oxo-L-proline + ATP + 2 H2O = L-glutamate + ADP + phosphate + H(+). In terms of biological role, catalyzes the cleavage of 5-oxoproline to form L-glutamate coupled to the hydrolysis of ATP to ADP and inorganic phosphate. In Ralstonia pickettii (strain 12J), this protein is 5-oxoprolinase subunit A.